The sequence spans 210 residues: Outer-membrane lipoprotein LolB (210 aa).

A signal peptide spans 1-26 (MSKLKIDTKRRFSLLIALVLIISLSS). The N-palmitoyl cysteine moiety is linked to residue C27. A lipid anchor (S-diacylglycerol cysteine) is attached at C27.

It belongs to the LolB family. Monomer.

The protein resides in the cell outer membrane. Functionally, plays a critical role in the incorporation of lipoproteins in the outer membrane after they are released by the LolA protein. The sequence is that of Outer-membrane lipoprotein LolB from Francisella tularensis subsp. holarctica (strain FTNF002-00 / FTA).